Consider the following 75-residue polypeptide: Brevinin-2SN2 (75 aa).

The first 22 residues, 1–22 (MFTMKKSLLFLFFLGTISLSFC), serve as a signal peptide directing secretion. A propeptide spans 23-40 (EEERGADEDDGGEMTEEE) (removed in mature form). The cysteines at positions 69 and 75 are disulfide-linked.

Belongs to the frog skin active peptide (FSAP) family. Brevinin subfamily. In terms of tissue distribution, expressed by the skin glands.

The protein localises to the secreted. In terms of biological role, antimicrobial peptide. Active against some Gram-negative and a variety of Gram-positive bacterial strains. Active against fungus C.glabrata 090902 but not against C.albicans ATCC 10231. Shows hemolytic activity against human erythrocytes. In Sylvirana spinulosa (Fine-spined frog), this protein is Brevinin-2SN2.